Consider the following 303-residue polypeptide: MADQKILWGIAPIGWRNDDIPEIGAGNTLSHLLSDIVVARFQGTEVGGFFPDAKTLNKELELRNLKIAGQWFSSYLIRDPFESVSKEFHAHCAYLEEVGASVAVVSEQTYSIQQSEQNIFTEKPMFTDSEWLTLCEGLNELGKIAQQYGLTLVYHHHMGTGVQTLAEVDRLMENTDPTLVSLLYDTGHIYVSDNDYMLLLTKHLDRIKHVHFKDVRSDILAKCQEQGQSFLQSFLAGMFTVPGDGCIDFTKVYDVLLTHDYRGWIVVEAEQDPAKAHPLEYALKARQYIDEKLLTTDEMKERI.

This sequence belongs to the IolE/MocC family. Requires glutathione as cofactor. Co(2+) is required as a cofactor. Mn(2+) serves as cofactor.

It catalyses the reaction scyllo-inosose = 3D-3,5/4-trihydroxycyclohexane-1,2-dione + H2O. The protein operates within polyol metabolism; myo-inositol degradation into acetyl-CoA; acetyl-CoA from myo-inositol: step 2/7. Catalyzes the dehydration of inosose (2-keto-myo-inositol, 2KMI or 2,4,6/3,5-pentahydroxycyclohexanone) to 3D-(3,5/4)-trihydroxycyclohexane-1,2-dione (D-2,3-diketo-4-deoxy-epi-inositol). The sequence is that of Inosose dehydratase from Halalkalibacterium halodurans (strain ATCC BAA-125 / DSM 18197 / FERM 7344 / JCM 9153 / C-125) (Bacillus halodurans).